Reading from the N-terminus, the 769-residue chain is Serine protease HtrA-like (769 aa).

A compositionally biased stretch (basic residues) spans 1–20; sequence MDIGKKHVIPKSQYRRKRRE. The segment at 1–388 is disordered; that stretch reads MDIGKKHVIP…KKATSKLNKG (388 aa). 3 stretches are compositionally biased toward basic and acidic residues: residues 21–64, 71–87, and 96–108; these read FFHN…ERFK, LEQRNRDVNENKAEESK, and YNKDHYLTDDVSK. Positions 126-139 are enriched in polar residues; the sequence is YEQNTEATLSTNST. Positions 140–186 are enriched in basic and acidic residues; it reads DKVESTDMRKLSSDKNKVGHEEQHVLSKPSEHDKETRIDFESSRTDS. The span at 247-262 shows a compositional bias: polar residues; sequence QQSQNEQTKTYTYGDS. Composition is skewed to basic and acidic residues over residues 264–296 and 310–330; these read QNDKSNHENDLSHHTPSISDDKDYVMREDHIVD and KIDDDRKLDEKIHVEDKHKQN. Over residues 331-347 the composition is skewed to polar residues; sequence ADSSETVGYQSQSSASH. The segment covering 348-364 has biased composition (basic and acidic residues); sequence RSTEKRNMAINDHDKLN. Positions 366–388 are enriched in polar residues; that stretch reads QKPNTKTSANNNQKKATSKLNKG. The helical transmembrane segment at 410 to 430 threads the bilayer; it reads LVILMGIIILIVILNAIFNNV. Catalysis depends on charge relay system residues His-504, Asp-534, and Ser-619. Residues 680 to 733 enclose the PDZ domain; the sequence is IASLNSFERQAVKLLGKVKNGVVVDQVDNNGLADQSGLKKGDVITELDGKLLED.

The protein belongs to the peptidase S1C family.

The protein resides in the cell membrane. The sequence is that of Serine protease HtrA-like from Staphylococcus aureus (strain MRSA252).